A 227-amino-acid chain; its full sequence is Cytochrome c oxidase subunit 2 (227 aa).

Residues 1 to 14 (MAHAAQVGLQDATS) are Mitochondrial intermembrane-facing. A helical membrane pass occupies residues 15–45 (PIMEELVIFHDHALMIIFLICFLVLYALFLT). Residues 46-59 (LTTKLTNTSISDAQ) lie on the Mitochondrial matrix side of the membrane. The chain crosses the membrane as a helical span at residues 60-87 (EMETIWTILPAIILILIALPSLRILYLT). Over 88–227 (DEINDPSFTI…IFEMGPVFTL (140 aa)) the chain is Mitochondrial intermembrane. Residues histidine 161, cysteine 196, glutamate 198, cysteine 200, histidine 204, and methionine 207 each coordinate Cu cation. Glutamate 198 is a Mg(2+) binding site.

Belongs to the cytochrome c oxidase subunit 2 family. As to quaternary structure, component of the cytochrome c oxidase (complex IV, CIV), a multisubunit enzyme composed of 14 subunits. The complex is composed of a catalytic core of 3 subunits MT-CO1, MT-CO2 and MT-CO3, encoded in the mitochondrial DNA, and 11 supernumerary subunits COX4I, COX5A, COX5B, COX6A, COX6B, COX6C, COX7A, COX7B, COX7C, COX8 and NDUFA4, which are encoded in the nuclear genome. The complex exists as a monomer or a dimer and forms supercomplexes (SCs) in the inner mitochondrial membrane with NADH-ubiquinone oxidoreductase (complex I, CI) and ubiquinol-cytochrome c oxidoreductase (cytochrome b-c1 complex, complex III, CIII), resulting in different assemblies (supercomplex SCI(1)III(2)IV(1) and megacomplex MCI(2)III(2)IV(2)). Found in a complex with TMEM177, COA6, COX18, COX20, SCO1 and SCO2. Interacts with TMEM177 in a COX20-dependent manner. Interacts with COX20. Interacts with COX16. It depends on Cu cation as a cofactor.

It localises to the mitochondrion inner membrane. It catalyses the reaction 4 Fe(II)-[cytochrome c] + O2 + 8 H(+)(in) = 4 Fe(III)-[cytochrome c] + 2 H2O + 4 H(+)(out). Component of the cytochrome c oxidase, the last enzyme in the mitochondrial electron transport chain which drives oxidative phosphorylation. The respiratory chain contains 3 multisubunit complexes succinate dehydrogenase (complex II, CII), ubiquinol-cytochrome c oxidoreductase (cytochrome b-c1 complex, complex III, CIII) and cytochrome c oxidase (complex IV, CIV), that cooperate to transfer electrons derived from NADH and succinate to molecular oxygen, creating an electrochemical gradient over the inner membrane that drives transmembrane transport and the ATP synthase. Cytochrome c oxidase is the component of the respiratory chain that catalyzes the reduction of oxygen to water. Electrons originating from reduced cytochrome c in the intermembrane space (IMS) are transferred via the dinuclear copper A center (CU(A)) of subunit 2 and heme A of subunit 1 to the active site in subunit 1, a binuclear center (BNC) formed by heme A3 and copper B (CU(B)). The BNC reduces molecular oxygen to 2 water molecules using 4 electrons from cytochrome c in the IMS and 4 protons from the mitochondrial matrix. This is Cytochrome c oxidase subunit 2 (MT-CO2) from Pongo abelii (Sumatran orangutan).